A 193-amino-acid chain; its full sequence is ATP-dependent Clp protease proteolytic subunit (193 aa).

The active-site Nucleophile is serine 98. Histidine 123 is a catalytic residue.

Belongs to the peptidase S14 family. As to quaternary structure, fourteen ClpP subunits assemble into 2 heptameric rings which stack back to back to give a disk-like structure with a central cavity, resembling the structure of eukaryotic proteasomes.

The protein resides in the cytoplasm. It carries out the reaction Hydrolysis of proteins to small peptides in the presence of ATP and magnesium. alpha-casein is the usual test substrate. In the absence of ATP, only oligopeptides shorter than five residues are hydrolyzed (such as succinyl-Leu-Tyr-|-NHMec, and Leu-Tyr-Leu-|-Tyr-Trp, in which cleavage of the -Tyr-|-Leu- and -Tyr-|-Trp bonds also occurs).. Its function is as follows. Cleaves peptides in various proteins in a process that requires ATP hydrolysis. Has a chymotrypsin-like activity. Plays a major role in the degradation of misfolded proteins. This is ATP-dependent Clp protease proteolytic subunit from Glaesserella parasuis serovar 5 (strain SH0165) (Haemophilus parasuis).